The sequence spans 258 residues: Tryptophan synthase alpha chain (258 aa).

Active-site proton acceptor residues include Glu47 and Asp58.

This sequence belongs to the TrpA family. Tetramer of two alpha and two beta chains.

The enzyme catalyses (1S,2R)-1-C-(indol-3-yl)glycerol 3-phosphate + L-serine = D-glyceraldehyde 3-phosphate + L-tryptophan + H2O. It participates in amino-acid biosynthesis; L-tryptophan biosynthesis; L-tryptophan from chorismate: step 5/5. Functionally, the alpha subunit is responsible for the aldol cleavage of indoleglycerol phosphate to indole and glyceraldehyde 3-phosphate. In Bacillus cereus (strain ATCC 10987 / NRS 248), this protein is Tryptophan synthase alpha chain.